Reading from the N-terminus, the 514-residue chain is ATP synthase subunit alpha (514 aa).

170–177 (GDRQIGKT) is an ATP binding site.

It belongs to the ATPase alpha/beta chains family. In terms of assembly, F-type ATPases have 2 components, CF(1) - the catalytic core - and CF(0) - the membrane proton channel. CF(1) has five subunits: alpha(3), beta(3), gamma(1), delta(1), epsilon(1). CF(0) has three main subunits: a(1), b(2) and c(9-12). The alpha and beta chains form an alternating ring which encloses part of the gamma chain. CF(1) is attached to CF(0) by a central stalk formed by the gamma and epsilon chains, while a peripheral stalk is formed by the delta and b chains.

The protein resides in the cell inner membrane. It carries out the reaction ATP + H2O + 4 H(+)(in) = ADP + phosphate + 5 H(+)(out). Functionally, produces ATP from ADP in the presence of a proton gradient across the membrane. The alpha chain is a regulatory subunit. This Pseudomonas aeruginosa (strain LESB58) protein is ATP synthase subunit alpha.